The sequence spans 1521 residues: Suppressor of Ty 6 homolog (1521 aa).

Positions 1–238 (MDFIDNQAEE…EEIIEDDGEG (238 aa)) are disordered. Residues 26 to 41 (KKMKMAKEKSKRKKKM) are compositionally biased toward basic residues. The Nuclear localization signal motif lies at 26 to 42 (KKMKMAKEKSKRKKKMV). 2 stretches are compositionally biased toward acidic residues: residues 45–56 (SDEDEDDDDDEE) and 67–76 (ADDDDEEEDA). Over residues 77 to 89 (KSEKSEKSRHSGE) the composition is skewed to basic and acidic residues. Residues 90–99 (DELDDEDLDL) are compositionally biased toward acidic residues. Over residues 126–157 (PIRRPNHEDDDLLSERGSDDGDRRKDRGRGDR) the composition is skewed to basic and acidic residues. 3 stretches are compositionally biased toward acidic residues: residues 166–176 (RSEDDFIEDDG), 191–200 (NLPEGAEDDA), and 209–238 (FNLD…DGEG). Positions 1183–1252 (LGDSRQGGCP…ERFSLFLSCK (70 aa)) constitute an S1 motif domain. The 90-residue stretch at 1300–1389 (HPNFHNVSYE…IARFVQPMIQ (90 aa)) folds into the SH2 domain.

It belongs to the SPT6 family. As to quaternary structure, interacts with glp-1 and lin-12. In terms of tissue distribution, abundant in embryos, and less abundant in larvae.

The protein localises to the nucleus. Functionally, histone H3-H4 chaperone that plays a role in maintenance of chromatin structure during RNA polymerase II transcription elongation. Required for several aspects of morphogenesis of C.elegans, including regulation of division in the germline and gut and specification of ventral-uterine precursor cell fate. This Caenorhabditis elegans protein is Suppressor of Ty 6 homolog (emb-5).